An 869-amino-acid chain; its full sequence is Leucine--tRNA ligase (869 aa).

The 'HIGH' region signature appears at 42 to 52 (PYPSGNLHMGH). Residues 622–626 (KMSKS) carry the 'KMSKS' region motif. K625 is a binding site for ATP.

This sequence belongs to the class-I aminoacyl-tRNA synthetase family.

Its subcellular location is the cytoplasm. It carries out the reaction tRNA(Leu) + L-leucine + ATP = L-leucyl-tRNA(Leu) + AMP + diphosphate. The sequence is that of Leucine--tRNA ligase from Synechocystis sp. (strain ATCC 27184 / PCC 6803 / Kazusa).